Consider the following 1775-residue polypeptide: ATP-dependent RNA helicase DEAH12, chloroplastic (1775 aa).

The transit peptide at 1–33 directs the protein to the chloroplast; the sequence is MRNSFPPSDGGRSATDRRQQSSHSSSTNRYNSR. The disordered stretch occupies residues 1 to 77; that stretch reads MRNSFPPSDG…NPSSGYSPPV (77 aa). Positions 21–34 are enriched in low complexity; the sequence is SSHSSSTNRYNSRS. Residues 35 to 60 show a composition bias toward polar residues; that stretch reads AQSSPPLNHRPTWNQQHSQYPNSNFP. A Helicase ATP-binding domain is found at 316–480; that stretch reads LKKIHREQIM…FFSCGILLVN (165 aa). 329-336 lines the ATP pocket; the sequence is GETGSGKS. The DEAH box signature appears at 427-430; sequence DEAH. Residues 510-676 enclose the Helicase C-terminal domain; sequence DVVKMAVEIH…VALLRMLALG (167 aa). Residues 1560 to 1767 form a TRIAD supradomain region; that stretch reads IEVECPICLS…EPCYAHLRTI (208 aa). Positions 1564, 1567, 1580, 1582, 1585, 1588, 1607, 1612, 1652, 1657, 1675, 1678, 1683, 1686, 1691, 1696, 1722, and 1725 each coordinate Zn(2+). The RING-type 1 zinc-finger motif lies at 1564 to 1612; that stretch reads CPICLSEVDDGYSLEGCSHLFCKACLLEQFEASMRNFDAFPILCSHIDC. The segment at 1631–1696 adopts an IBR-type zinc-finger fold; sequence DELFSASLSS…HLEYHPLITC (66 aa). Residues 1722–1750 form an RING-type 2; atypical zinc finger; the sequence is CPICKSTIEKTDGCNHMKCRCGKHICWTC. Residue C1735 is part of the active site. Residues C1740 and C1742 each contribute to the Zn(2+) site.

This sequence belongs to the DEAD box helicase family. DEAH subfamily.

It localises to the plastid. The protein resides in the chloroplast. The catalysed reaction is ATP + H2O = ADP + phosphate + H(+). The protein is ATP-dependent RNA helicase DEAH12, chloroplastic of Arabidopsis thaliana (Mouse-ear cress).